An 830-amino-acid polypeptide reads, in one-letter code: Pentatricopeptide repeat-containing protein At5g55740, chloroplastic (830 aa).

The transit peptide at 1-59 directs the protein to the chloroplast; sequence MASLPFNTIPNKVPFSVSSKPSSKHHDEQAHSPSSTSYFHRVSSLCKNGEIKEALSLVT. The interval 15-36 is disordered; the sequence is FSVSSKPSSKHHDEQAHSPSST. 19 PPR repeats span residues 69–103, 106–136, 137–171, 172–206, 207–237, 238–272, 273–307, 308–338, 339–373, 374–408, 409–439, 440–474, 475–509, 510–544, 545–575, 581–611, 612–646, 647–682, and 683–713; these read GPEI…GDFY, NEYI…LRVR, NVFS…EIFP, DNFV…GLED, CVFV…IPDR, NAVA…GVEP, TRVT…GMEL, DNIL…MFEK, DVVT…KLKY, DCVT…SFES, DIVL…TVEK, DLIL…GVPP, NVIT…GIIP, NLIS…GLRP, NAFS…IIRN, LVSI…KLYS, ELPL…GLKP, DNIT…SMKP, and CLEH…MPFK. Residues 718–793 form a type E motif region; the sequence is MIQSLVASCN…KPGCSWIQIT (76 aa). Residues 796–826 form a type E(+) motif region; it reads EGVHVFVANDKTHTRINEIQMMLALLLYDMG.

Belongs to the PPR family. PCMP-E subfamily.

The protein resides in the plastid. Its subcellular location is the chloroplast. Functionally, plays a major role in chloroplast RNA editing. Acts as a site-recognition transacting factor involved in the edition of the site 2 of ndhD (ndhD-2), which encodes a subunit of the NDH complex. This is Pentatricopeptide repeat-containing protein At5g55740, chloroplastic (CRR21) from Arabidopsis thaliana (Mouse-ear cress).